We begin with the raw amino-acid sequence, 109 residues long: Nucleoid-associated protein HAPS_1040 (109 aa).

Positions 1–21 (MFGKGGLGGLMKQAQQMQERM) are disordered. Positions 10–19 (LMKQAQQMQE) are enriched in low complexity.

It belongs to the YbaB/EbfC family. Homodimer.

The protein localises to the cytoplasm. It is found in the nucleoid. In terms of biological role, binds to DNA and alters its conformation. May be involved in regulation of gene expression, nucleoid organization and DNA protection. This chain is Nucleoid-associated protein HAPS_1040, found in Glaesserella parasuis serovar 5 (strain SH0165) (Haemophilus parasuis).